The sequence spans 316 residues: dTDP-4-dehydro-6-deoxyglucose reductase (316 aa).

16 to 17 (FI) is an NAD(+) binding site. The active-site Proton acceptor is Tyr-151. Lys-155 contributes to the NAD(+) binding site.

It belongs to the NAD(P)-dependent epimerase/dehydratase family.

It carries out the reaction dTDP-alpha-D-fucose + NAD(+) = dTDP-4-dehydro-6-deoxy-alpha-D-glucose + NADH + H(+). The catalysed reaction is dTDP-alpha-D-fucose + NADP(+) = dTDP-4-dehydro-6-deoxy-alpha-D-glucose + NADPH + H(+). It participates in bacterial outer membrane biogenesis; LPS O-antigen biosynthesis. Its activity is regulated as follows. Inhibited by Cu(2+), while other divalent cations such as Ca(2+), Co(2+), Fe(2+), Mn(2+) and Mg(2+) have no obvious effects on enzyme activity. Functionally, catalyzes the stereospecific reduction of the C-4 keto group of dTDP-4-dehydro-6-deoxy-D-glucose, leading to dTDP-D-fucopyranose. This is a step in the biosynthesis of D-fucofuranose, a component of E.coli O52 O antigen. Is more efficient using NADH than NADPH as cosubstrate. In Escherichia coli, this protein is dTDP-4-dehydro-6-deoxyglucose reductase (fcf1).